Consider the following 241-residue polypeptide: Small ribosomal subunit protein uS3 (241 aa).

The KH type-2 domain occupies Ile-39–Arg-107. Residues Met-219–Ala-241 form a disordered region. Basic and acidic residues predominate over residues Gly-231 to Ala-241.

This sequence belongs to the universal ribosomal protein uS3 family. Part of the 30S ribosomal subunit. Forms a tight complex with proteins S10 and S14.

Binds the lower part of the 30S subunit head. Binds mRNA in the 70S ribosome, positioning it for translation. The chain is Small ribosomal subunit protein uS3 from Beijerinckia indica subsp. indica (strain ATCC 9039 / DSM 1715 / NCIMB 8712).